Consider the following 455-residue polypeptide: Elongation factor Tu, mitochondrial (455 aa).

Residues 1-46 (MTTMAAATLLRATPHFSGLAAGRTFLLQGLLRLLKAPALPLLCRGL) constitute a mitochondrion transit peptide. The 197-residue stretch at 58–254 (KPHVNVGTIG…AVDTYIPVPA (197 aa)) folds into the tr-type G domain. The tract at residues 67-74 (GHVDHGKT) is G1. Residues Asp70, Gly72, Lys73, Thr74, and Thr75 each contribute to the GTP site. Mg(2+) is bound at residue Thr74. An N6-acetyllysine modification is found at Lys82. At Lys91 the chain carries N6-acetyllysine; alternate. N6-succinyllysine; alternate is present on Lys91. Residues 108–112 (GITIN) form a G2 region. The G3 stretch occupies residues 129–132 (DCPG). GTP contacts are provided by Asn184, Asp187, Ser222, Ala223, and Leu224. The tract at residues 184 to 187 (NKAD) is G4. Residues 222–224 (SAL) are G5. The residue at position 237 (Lys237) is an N6-succinyllysine. Residue Lys259 is modified to N6-acetyllysine. Thr281 carries the phosphothreonine modification. At Lys289 the chain carries N6-succinyllysine. Ser315 carries the phosphoserine modification. Residues Lys364 and Lys421 each carry the N6-acetyllysine modification.

It belongs to the TRAFAC class translation factor GTPase superfamily. Classic translation factor GTPase family. EF-Tu/EF-1A subfamily. As to quaternary structure, interacts with NLRX1. Interacts with ATG16L1. In terms of assembly, (Microbial infection) Interacts with human parainfluenza virus 3 matrix protein; this interaction inhibits RLR-mediated type I interferon production while promoting autophagy. (Microbial infection) Interacts with Hantaan hantavirus glycoprotein N; this interaction contributes to the virus-induced degradation of mitochondria by autophagy, which leads to degradation of MAVS and inhibition of type I interferon (IFN) responses.

It is found in the mitochondrion. It catalyses the reaction GTP + H2O = GDP + phosphate + H(+). Functionally, GTP hydrolase that promotes the GTP-dependent binding of aminoacyl-tRNA to the A-site of ribosomes during protein biosynthesis. Also plays a role in the regulation of autophagy and innate immunity. Recruits ATG5-ATG12 and NLRX1 at mitochondria and serves as a checkpoint of the RIGI-MAVS pathway. In turn, inhibits RLR-mediated type I interferon while promoting autophagy. In Homo sapiens (Human), this protein is Elongation factor Tu, mitochondrial (TUFM).